Reading from the N-terminus, the 307-residue chain is Glutaminase (307 aa).

Substrate is bound by residues Ser67, Asn117, Glu161, Asn168, Tyr192, Tyr243, and Val261.

Belongs to the glutaminase family. Homotetramer.

The enzyme catalyses L-glutamine + H2O = L-glutamate + NH4(+). The polypeptide is Glutaminase (Streptomyces coelicolor (strain ATCC BAA-471 / A3(2) / M145)).